The primary structure comprises 997 residues: FIP1[III]-like protein (997 aa).

Disordered regions lie at residues 250–272 (ITSNEASRSDVSHSYGSKDLNSV), 289–475 (AGSF…ETEG), 534–553 (SRSSFDLNQRNSRSSFKEED), and 880–900 (QGKVSNQSKKRFSNGGDTIEQ). The segment covering 261 to 272 (SHSYGSKDLNSV) has biased composition (polar residues). Composition is skewed to basic and acidic residues over residues 309–323 (TPSDKEMLEKEKEES), 334–346 (SVERESSLGDRIR), 367–379 (ESLKDSATDDQRE), and 388–404 (RLAEHEAISIKRGEDSG). The Nuclear localization signal signature appears at 397–404 (IKRGEDSG). Over residues 534 to 547 (SRSSFDLNQRNSRS) the composition is skewed to polar residues. A coiled-coil region spans residues 930–963 (EIIEEVKGVEIDNERIQESLKKMEKRRERFKGTK).

Belongs to the FIP1 family. In terms of assembly, component of the cleavage and polyadenylation specificity factor (CPSF) complex. Forms a complex with cleavage and polyadenylation specificity factor (CPSF) subunits CLPS5, FIPS5, PAPS4, PCFS1, CSTF64 and CPSF30.

It localises to the nucleus. Functionally, component of the cleavage and polyadenylation specificity factor (CPSF) complex that plays a key role in pre-mRNA 3'-end formation, recognizing the AAUAAA signal sequence and interacting with poly(A) polymerase and other factors to bring about cleavage and poly(A) addition. FIP1L1 contributes to poly(A) site recognition and stimulates poly(A) addition. Binds to U-rich RNA sequence elements surrounding the poly(A) site. May act to tether poly(A) polymerase to the CPSF complex. The chain is FIP1[III]-like protein from Arabidopsis thaliana (Mouse-ear cress).